The chain runs to 78 residues: Small acidic protein 2 (78 aa).

In terms of tissue distribution, expressed in siliques and anthers.

Its function is as follows. Mediates responses to the synthetic auxin 2,4-dichlorophenoxyacetic acid (2,4-D). Not involved in the response to indole-3-acetic acid (IAA). May interact with RUB modification-related components and may regulate the culling-ring ubiquitin E3 ligase complex (CRL) activity. The chain is Small acidic protein 2 (SMAP2) from Arabidopsis thaliana (Mouse-ear cress).